We begin with the raw amino-acid sequence, 82 residues long: Large ribosomal subunit protein bL27 (82 aa).

Residues 1–54 are disordered; sequence MAHKKGQGASRNGRDSESKRLGMKVGAGQRVSTGSILVRQRGTKWHPSQNVGRG.

The protein belongs to the bacterial ribosomal protein bL27 family.

This chain is Large ribosomal subunit protein bL27, found in Chlamydia caviae (strain ATCC VR-813 / DSM 19441 / 03DC25 / GPIC) (Chlamydophila caviae).